A 91-amino-acid chain; its full sequence is Acylphosphatase (91 aa).

Residues 4 to 91 enclose the Acylphosphatase-like domain; that stretch reads RYLIKVLGRV…DNEKSFKIVY (88 aa). Catalysis depends on residues Arg-19 and Asn-37.

This sequence belongs to the acylphosphatase family.

It catalyses the reaction an acyl phosphate + H2O = a carboxylate + phosphate + H(+). This chain is Acylphosphatase (acyP), found in Clostridium acetobutylicum (strain ATCC 824 / DSM 792 / JCM 1419 / IAM 19013 / LMG 5710 / NBRC 13948 / NRRL B-527 / VKM B-1787 / 2291 / W).